Consider the following 272-residue polypeptide: Ribonuclease 3 (272 aa).

A compositionally biased stretch (polar residues) spans 1–20 (MTDDVTNVEQPSTASEQQPQ). Residues 1–38 (MTDDVTNVEQPSTASEQQPQDVPAAEPSAAKKRRANKA) are disordered. The RNase III domain occupies 44–171 (AAAIEQRLGH…VIGAIYLDGG (128 aa)). Position 84 (E84) interacts with Mg(2+). Residue D88 is part of the active site. The Mg(2+) site is built by D157 and E160. Residue E160 is part of the active site. The DRBM domain occupies 196–265 (DPKTVLQEWA…ASAMLAREGV (70 aa)).

It belongs to the ribonuclease III family. As to quaternary structure, homodimer. Requires Mg(2+) as cofactor.

The protein resides in the cytoplasm. The catalysed reaction is Endonucleolytic cleavage to 5'-phosphomonoester.. In terms of biological role, digests double-stranded RNA. Involved in the processing of primary rRNA transcript to yield the immediate precursors to the large and small rRNAs (23S and 16S). Processes some mRNAs, and tRNAs when they are encoded in the rRNA operon. Processes pre-crRNA and tracrRNA of type II CRISPR loci if present in the organism. The polypeptide is Ribonuclease 3 (Rhodopseudomonas palustris (strain ATCC BAA-98 / CGA009)).